A 446-amino-acid polypeptide reads, in one-letter code: tRNA modification GTPase MnmE (446 aa).

Arg-22, Glu-80, and Lys-119 together coordinate (6S)-5-formyl-5,6,7,8-tetrahydrofolate. Residues 215-370 (GLSLVIAGRP…LKKVIKQVVG (156 aa)) form the TrmE-type G domain. Asn-225 contacts K(+). Residues 225–230 (NAGKST), 244–250 (TEIAGTT), and 269–272 (DTAG) each bind GTP. Mg(2+) is bound at residue Ser-229. Residues Thr-244, Ile-246, and Thr-249 each contribute to the K(+) site. A Mg(2+)-binding site is contributed by Thr-250. Residue Lys-446 participates in (6S)-5-formyl-5,6,7,8-tetrahydrofolate binding.

The protein belongs to the TRAFAC class TrmE-Era-EngA-EngB-Septin-like GTPase superfamily. TrmE GTPase family. As to quaternary structure, homodimer. Heterotetramer of two MnmE and two MnmG subunits. K(+) serves as cofactor.

Its subcellular location is the cytoplasm. Its function is as follows. Exhibits a very high intrinsic GTPase hydrolysis rate. Involved in the addition of a carboxymethylaminomethyl (cmnm) group at the wobble position (U34) of certain tRNAs, forming tRNA-cmnm(5)s(2)U34. In Legionella pneumophila (strain Paris), this protein is tRNA modification GTPase MnmE.